The chain runs to 320 residues: MRSAQVYRWQIPMDAGVVLRDRRLKTRDGLYVCLRDGEREGWGEISPLPGFSQETWEEAQTALLTWVNDWLQGSEGLPEMPSVAFGASCALAELTGVLPEAADYRAAPLCTGDPDDLVLRLADMPGEKIAKVKVGLYEAVRDGMVVNLLLEAIPDLHLRLDANRAWTPLKAQQFAKYVNPDYRARIAFLEEPCKTRDDSRAFARETGIAIAWDESLREADFTFEAEEGVRAVVIKPTLTGSLDKVREQVAAAHALGLTAVISSSIESSLGLTQLARIAAWLTPGTLPGLDTLHLMQAQQVRPWPGNALPCLKRDELERLL.

The active-site Proton donor is the lysine 133. Mg(2+)-binding residues include aspartate 161, glutamate 190, and aspartate 213. Lysine 235 (proton acceptor) is an active-site residue.

This sequence belongs to the mandelate racemase/muconate lactonizing enzyme family. MenC type 1 subfamily. Requires a divalent metal cation as cofactor.

The enzyme catalyses (1R,6R)-6-hydroxy-2-succinyl-cyclohexa-2,4-diene-1-carboxylate = 2-succinylbenzoate + H2O. It functions in the pathway quinol/quinone metabolism; 1,4-dihydroxy-2-naphthoate biosynthesis; 1,4-dihydroxy-2-naphthoate from chorismate: step 4/7. The protein operates within quinol/quinone metabolism; menaquinone biosynthesis. Its function is as follows. Converts 2-succinyl-6-hydroxy-2,4-cyclohexadiene-1-carboxylate (SHCHC) to 2-succinylbenzoate (OSB). This chain is o-succinylbenzoate synthase, found in Salmonella typhi.